The sequence spans 572 residues: Mitochondrial distribution and morphology protein 34 (572 aa).

Positions 1–195 (MAFNFNWSPL…LPAIIHRLSL (195 aa)) constitute an SMP-LTD domain. Disordered regions lie at residues 212-236 (TASANGEGPGQDPLASPPQDPVDAL), 355-426 (GAGR…PDND), 487-507 (HGASVLEKGKQDPDSSAGSSR), and 552-572 (ACGPFWDRHSQEESPPPAYGH). The span at 358 to 370 (RHSKAHARKRKKR) shows a compositional bias: basic residues. Residues 371 to 381 (VVDLRRPKTTD) are compositionally biased toward basic and acidic residues. Polar residues predominate over residues 387-400 (SDESSFTESTSAPS).

This sequence belongs to the MDM34 family. As to quaternary structure, component of the ER-mitochondria encounter structure (ERMES) or MDM complex, composed of mmm1, mdm10, mdm12 and mdm34.

It is found in the mitochondrion outer membrane. Functionally, component of the ERMES/MDM complex, which serves as a molecular tether to connect the endoplasmic reticulum (ER) and mitochondria. Components of this complex are involved in the control of mitochondrial shape and protein biogenesis, and function in nonvesicular lipid trafficking between the ER and mitochondria. Mdm34 is required for the interaction of the ER-resident membrane protein mmm1 and the outer mitochondrial membrane-resident beta-barrel protein mdm10. In Aspergillus fumigatus (strain ATCC MYA-4609 / CBS 101355 / FGSC A1100 / Af293) (Neosartorya fumigata), this protein is Mitochondrial distribution and morphology protein 34.